Here is a 71-residue protein sequence, read N- to C-terminus: Sec-independent protein translocase protein TatA (71 aa).

Residues 1–21 (MGSFSIWHWLIVLVVVLLLFG) traverse the membrane as a helical segment. The segment at 47–71 (AEEAKTVEHRTDEPVGEVKQKASKS) is disordered. The segment covering 49-71 (EAKTVEHRTDEPVGEVKQKASKS) has biased composition (basic and acidic residues).

Belongs to the TatA/E family. The Tat system comprises two distinct complexes: a TatABC complex, containing multiple copies of TatA, TatB and TatC subunits, and a separate TatA complex, containing only TatA subunits. Substrates initially bind to the TatABC complex, which probably triggers association of the separate TatA complex to form the active translocon.

The protein localises to the cell inner membrane. Its function is as follows. Part of the twin-arginine translocation (Tat) system that transports large folded proteins containing a characteristic twin-arginine motif in their signal peptide across membranes. TatA could form the protein-conducting channel of the Tat system. In Chelativorans sp. (strain BNC1), this protein is Sec-independent protein translocase protein TatA.